A 417-amino-acid chain; its full sequence is Phosphoglycerate kinase (417 aa).

14 residues coordinate (2R)-3-phosphoglycerate: Val23, Asp24, Phe25, Asn26, Gln38, Arg39, Ser62, His63, Gly65, Arg66, Leu121, Arg122, His169, and Arg170. Gly213 provides a ligand contact to ADP. Gly213 provides a ligand contact to CDP. AMP-binding residues include Ala214 and Lys215. ATP is bound at residue Ala214. Ala214 contributes to the Mg(2+) binding site. CDP is bound at residue Asp218. Residue Asp218 participates in Mg(2+) binding. Residue Lys219 participates in AMP binding. Lys219 provides a ligand contact to ATP. Residue Gly237 coordinates ADP. CDP is bound at residue Gly237. AMP-binding residues include Gly238 and Gly312. The ATP site is built by Gly238 and Gly312. Residues Gly337 and Phe342 each coordinate CDP. Residue Phe342 participates in ADP binding. Glu343 lines the AMP pocket. ATP contacts are provided by Glu343, Asp374, and Thr375. Asp374 is a binding site for Mg(2+).

The protein belongs to the phosphoglycerate kinase family. As to quaternary structure, monomer. It depends on Mg(2+) as a cofactor.

Its subcellular location is the cytoplasm. It localises to the secreted. It is found in the cell wall. The protein localises to the mitochondrion. The enzyme catalyses (2R)-3-phosphoglycerate + ATP = (2R)-3-phospho-glyceroyl phosphate + ADP. It functions in the pathway carbohydrate degradation; glycolysis; pyruvate from D-glyceraldehyde 3-phosphate: step 2/5. Functionally, catalyzes one of the two ATP producing reactions in the glycolytic pathway via the reversible conversion of 1,3-diphosphoglycerate to 3-phosphoglycerate. Both L- and D- forms of purine and pyrimidine nucleotides can be used as substrates, but the activity is much lower on pyrimidines. Negatively regulates the biosynthesis of acetyl-CoA from pyruvate in the mitochondrion. In Candida albicans (strain SC5314 / ATCC MYA-2876) (Yeast), this protein is Phosphoglycerate kinase (PGK1).